The chain runs to 733 residues: Photosystem I P700 chlorophyll a apoprotein A2 (733 aa).

8 helical membrane passes run 46 to 69 (IFAS…FHVA), 134 to 157 (LYLG…LHLQ), 174 to 198 (LNHH…HVAL), 272 to 290 (IAHH…GHMY), 329 to 352 (LHIQ…QHMY), 368 to 394 (AALY…IFFV), 416 to 438 (AIIS…LYIH), and 516 to 534 (FLVH…LILV). Residues C558 and C567 each contribute to the [4Fe-4S] cluster site. The next 2 helical transmembrane spans lie at 574–595 (AFYL…YWHW) and 642–664 (LSVW…MFLI). Chlorophyll a is bound by residues H653, M661, and Y669. W670 is a phylloquinone binding site. A helical transmembrane segment spans residues 706 to 726 (LVGLVHFAVGYILTYAAFVIA).

This sequence belongs to the PsaA/PsaB family. In terms of assembly, the PsaA/B heterodimer binds the P700 chlorophyll special pair and subsequent electron acceptors. PSI consists of a core antenna complex that captures photons, and an electron transfer chain that converts photonic excitation into a charge separation. The eukaryotic PSI reaction center is composed of at least 11 subunits. Requires P700 is a chlorophyll a/chlorophyll a' dimer, A0 is one or more chlorophyll a, A1 is one or both phylloquinones and FX is a shared 4Fe-4S iron-sulfur center. as cofactor.

It localises to the plastid. Its subcellular location is the chloroplast thylakoid membrane. The enzyme catalyses reduced [plastocyanin] + hnu + oxidized [2Fe-2S]-[ferredoxin] = oxidized [plastocyanin] + reduced [2Fe-2S]-[ferredoxin]. In terms of biological role, psaA and PsaB bind P700, the primary electron donor of photosystem I (PSI), as well as the electron acceptors A0, A1 and FX. PSI is a plastocyanin/cytochrome c6-ferredoxin oxidoreductase, converting photonic excitation into a charge separation, which transfers an electron from the donor P700 chlorophyll pair to the spectroscopically characterized acceptors A0, A1, FX, FA and FB in turn. Oxidized P700 is reduced on the lumenal side of the thylakoid membrane by plastocyanin or cytochrome c6. This is Photosystem I P700 chlorophyll a apoprotein A2 from Trieres chinensis (Marine centric diatom).